The sequence spans 107 residues: RecQ-mediated genome instability protein 2 homolog (107 aa).

It belongs to the RMI2 family. In terms of assembly, component of the RMI complex, containing at least top-3, rmh-1 and rmh-2. Component of the BTR double Holliday Junction dissolution complex composed of at least him-6, top-3, rmh-1 and rmif-2, which is involved in double strand break repair in the germline. Interacts with rmh-1; the interaction is direct and is required for mutual stability and localization at nuclear foci. In terms of tissue distribution, expressed in the germline.

Its subcellular location is the nucleus. Its function is as follows. Essential component of the RMI complex, a complex that plays an important role in the processing of homologous recombination intermediates. Component of the BTR double Holliday Junction dissolution complex, which is involved in homologous recombination during meiotic double strand break in the germline. Plays a role in double strand break repair by positively regulating the accumulation of rad-51 at double strand breaks. Stabilizes and positively regulates the localization of the BTR double Holliday Junction dissolution complex components rmh-1, him-6 and top-3 at nuclear foci during meiotic recombination. Positively regulates meiotic recombination, chiasma formation, and chromosome segregation in meiosis. Positively regulates DNA crossover formation and positioning on chromosome arms (away from the chromosome center) during homologous recombination. This chain is RecQ-mediated genome instability protein 2 homolog, found in Caenorhabditis elegans.